The sequence spans 110 residues: uncharacterized protein (110 aa).

The chain crosses the membrane as a helical span at residues 29 to 49; sequence GLAFIFFFLVAFYFFPAFWDL.

It localises to the membrane. This is an uncharacterized protein from Saccharomyces cerevisiae (strain ATCC 204508 / S288c) (Baker's yeast).